A 402-amino-acid chain; its full sequence is 4-hydroxy-3-methylbut-2-enyl diphosphate reductase (402 aa).

A [4Fe-4S] cluster-binding site is contributed by Cys-66. His-96 lines the (2E)-4-hydroxy-3-methylbut-2-enyl diphosphate pocket. His-96 provides a ligand contact to dimethylallyl diphosphate. His-96 lines the isopentenyl diphosphate pocket. Position 157 (Cys-157) interacts with [4Fe-4S] cluster. His-185 lines the (2E)-4-hydroxy-3-methylbut-2-enyl diphosphate pocket. His-185 contacts dimethylallyl diphosphate. Residue His-185 participates in isopentenyl diphosphate binding. Glu-187 (proton donor) is an active-site residue. A (2E)-4-hydroxy-3-methylbut-2-enyl diphosphate-binding site is contributed by Thr-250. Cys-288 is a [4Fe-4S] cluster binding site. Residues Ser-317, Ser-318, Asn-319, and Ser-379 each contribute to the (2E)-4-hydroxy-3-methylbut-2-enyl diphosphate site. The dimethylallyl diphosphate site is built by Ser-317, Ser-318, Asn-319, and Ser-379. Positions 317, 318, 319, and 379 each coordinate isopentenyl diphosphate.

Belongs to the IspH family. It depends on [4Fe-4S] cluster as a cofactor.

It catalyses the reaction isopentenyl diphosphate + 2 oxidized [2Fe-2S]-[ferredoxin] + H2O = (2E)-4-hydroxy-3-methylbut-2-enyl diphosphate + 2 reduced [2Fe-2S]-[ferredoxin] + 2 H(+). It carries out the reaction dimethylallyl diphosphate + 2 oxidized [2Fe-2S]-[ferredoxin] + H2O = (2E)-4-hydroxy-3-methylbut-2-enyl diphosphate + 2 reduced [2Fe-2S]-[ferredoxin] + 2 H(+). It participates in isoprenoid biosynthesis; dimethylallyl diphosphate biosynthesis; dimethylallyl diphosphate from (2E)-4-hydroxy-3-methylbutenyl diphosphate: step 1/1. Its pathway is isoprenoid biosynthesis; isopentenyl diphosphate biosynthesis via DXP pathway; isopentenyl diphosphate from 1-deoxy-D-xylulose 5-phosphate: step 6/6. Its function is as follows. Catalyzes the conversion of 1-hydroxy-2-methyl-2-(E)-butenyl 4-diphosphate (HMBPP) into a mixture of isopentenyl diphosphate (IPP) and dimethylallyl diphosphate (DMAPP). Acts in the terminal step of the DOXP/MEP pathway for isoprenoid precursor biosynthesis. The protein is 4-hydroxy-3-methylbut-2-enyl diphosphate reductase of Microcystis aeruginosa (strain NIES-843 / IAM M-2473).